Here is a 425-residue protein sequence, read N- to C-terminus: 2-methylserine hydroxymethyltransferase (425 aa).

(6S)-5,6,7,8-tetrahydrofolate contacts are provided by residues L126 and 130–132; that span reads GHL. K235 carries the N6-(pyridoxal phosphate)lysine modification.

It belongs to the SHMT family. In terms of assembly, homodimer. It depends on pyridoxal 5'-phosphate as a cofactor.

The protein localises to the cytoplasm. It carries out the reaction (6R)-5,10-methylene-5,6,7,8-tetrahydrofolate + D-alanine + H2O = 2-methylserine + (6S)-5,6,7,8-tetrahydrofolate. The protein operates within one-carbon metabolism; tetrahydrofolate interconversion. Functionally, catalyzes the reversible interconversion of alpha-methyl-L-serine to D-alanine with tetrahydrofolate (THF) serving as the one-carbon carrier. Cannot use alpha-methyl-D-serine, L-serine, D-serine or L-alanine. The polypeptide is 2-methylserine hydroxymethyltransferase (Aminobacter sp).